The sequence spans 392 residues: Major outer membrane porin (392 aa).

The signal sequence occupies residues 1 to 22; the sequence is MKKLLKSALLFAAAGSALSLQA.

This sequence belongs to the chlamydial porin (CP) (TC 1.B.2) family. In terms of assembly, part of a disulfide cross-linked outer membrane complex (COMC) composed of the major outer membrane porin (MOMP), the small cysteine-rich protein (OmcA) and the large cysteine-rich periplasmic protein (OmcB).

It localises to the cell outer membrane. Functionally, in elementary bodies (EBs, the infectious stage, which is able to survive outside the host cell) provides the structural integrity of the outer envelope through disulfide cross-links with the small cysteine-rich protein and the large cysteine-rich periplasmic protein. It has been described in publications as the Sarkosyl-insoluble COMC (Chlamydia outer membrane complex), and serves as the functional equivalent of peptidoglycan. In terms of biological role, permits diffusion of specific solutes through the outer membrane. In Chlamydia psittaci (Chlamydophila psittaci), this protein is Major outer membrane porin (ompA).